A 463-amino-acid chain; its full sequence is Rop guanine nucleotide exchange factor 4 (463 aa).

2 disordered regions span residues 1–25 (MESSSNSDQNEGTPTSSVSSPYRRT) and 55–87 (GHEEDVSEDAEEPKDDVVNDVHGDGDEEDSDID). Residues 59 to 68 (DVSEDAEEPK) are compositionally biased toward acidic residues. Basic and acidic residues predominate over residues 69 to 78 (DDVVNDVHGD). The region spanning 84 to 463 (SDIDSAEDAE…VDRTVRNRDD (380 aa)) is the PRONE domain.

Interacts with ARAC10/ROP11. As to expression, expressed in root vascular tissue and trichoblast cell files. Expressed in root metaxylem cell files. Expressed in guard cells of cotyledons, rosette leaves, sepals, petal, stigmas and siliques. Expressed in root metaxylem cell files.

Its subcellular location is the cytoplasm. The protein localises to the cell membrane. Functionally, guanine-nucleotide exchange factor (GEF) that acts as an activator of Rop (Rho of plants) GTPases by promoting the exchange of GDP for GTP. In association with ROPGEF1, acts as a specific regulator of ARAC10/ROP11 function in ABA-mediated stomatal closure. This Arabidopsis thaliana (Mouse-ear cress) protein is Rop guanine nucleotide exchange factor 4 (ROPGEF4).